A 646-amino-acid chain; its full sequence is MEGVLVVLLSLVLVVLSVLILAVARLVRATRVDKVPDPAPVVPRTPAARGVGDVTGPADFDEEPTVRVLPAPWEGSGAPATTDADSPADRDGTAARTGDSAVTAGRSDGGLRAAHGGSAEEAAQIVARAEREAAERLARAERDAAEIRRRGEEDVALLRERMLAEAAVETSRVQAAARESVRAEQEAARTEIAATRAAFDGEQQAWRTELQSREVAIAAREQRVEDRMASLDDHGRRLADRDRDLLDRENDLTRRTAEVADLERARHAALEQVAGLTAGQARGELIAVIEQEARREAALTVREIEARAEEEGEERARRIVTTAIQRVASDQTTESVVTVLHLPGDEMKGRIIGREGRNIRAFESVTGVNVLIDDTPEAVLLSCFDPVRREVGRITLAALVSDGRIHPHRIEEEYARAQLEVAERCVRAGEDALLETGISEMHPELVNLLGQLRYRTSYGQNVLAHLIESAHLAGIMAAELRMPLPLAKRAALLHDLGKALTHEIEGSHALIGADVARRYGEDEQVVHAIEAHHNEVAPRSICAVLTQAADQISGGRPGARRDSLESYVKRLERIEQIAGDRPGVDKVFAMQAGREVRVMVVPEEIDDLAAHLLARDVARQIEEELTYPGQIRVTVVRETRAVGTAR.

The chain crosses the membrane as a helical span at residues V4 to A24. Disordered regions lie at residues P43 to E62 and L69 to S118. The 67-residue stretch at V336–D402 folds into the KH domain. The HD domain occupies V462–G555.

The protein belongs to the RNase Y family.

It is found in the cell membrane. Functionally, endoribonuclease that initiates mRNA decay. The sequence is that of Ribonuclease Y from Frankia casuarinae (strain DSM 45818 / CECT 9043 / HFP020203 / CcI3).